We begin with the raw amino-acid sequence, 305 residues long: MTDITRPENPESRCGFVAIVGRPNVGKSTLLNHILGQKLSITSRKPQTTRHQVLGIKTEGPVQAIYVDTPGMHEDEPRALNRYMNKAAASALIDVDVVVFVVDQLAWTSADEMVLEKLKRVKCPVILAVNKVDKLEKRELLLPHLEALSKKRDFAEIIPLSALKETNLEPLESAVGRFLPESVHFYPDDQITDRSERFMAAEMVREKITRQLGAELPYSVAVEIEEFKHQGNTLHVSALILVEREGQKKIIIGDKGERLRSIGQEARVDMERMFGSKVMLRLWVKVKRGWADSDRALKSLGMSDF.

The Era-type G domain maps to 13–181; that stretch reads RCGFVAIVGR…ESAVGRFLPE (169 aa). The G1 stretch occupies residues 21–28; the sequence is GRPNVGKS. 21–28 is a binding site for GTP; it reads GRPNVGKS. The G2 stretch occupies residues 47–51; it reads QTTRH. The G3 stretch occupies residues 68-71; sequence DTPG. GTP is bound by residues 68–72 and 130–133; these read DTPGM and NKVD. Residues 130 to 133 form a G4 region; the sequence is NKVD. The G5 stretch occupies residues 160-162; it reads LSA. In terms of domain architecture, KH type-2 spans 204–288; sequence VREKITRQLG…MLRLWVKVKR (85 aa).

This sequence belongs to the TRAFAC class TrmE-Era-EngA-EngB-Septin-like GTPase superfamily. Era GTPase family. As to quaternary structure, monomer.

The protein resides in the cytoplasm. It localises to the cell inner membrane. In terms of biological role, an essential GTPase that binds both GDP and GTP, with rapid nucleotide exchange. Plays a role in 16S rRNA processing and 30S ribosomal subunit biogenesis and possibly also in cell cycle regulation and energy metabolism. In Marinobacter nauticus (strain ATCC 700491 / DSM 11845 / VT8) (Marinobacter aquaeolei), this protein is GTPase Era.